Consider the following 447-residue polypeptide: Hemopexin (447 aa).

The N-terminal stretch at 1–18 (MRLIQALSLCLALSLSLA) is a signal peptide. The disordered stretch occupies residues 20–44 (PPQHKEDHSHKGKPGGEGHKHELHH). Over residues 22-44 (QHKEDHSHKGKPGGEGHKHELHH) the composition is skewed to basic and acidic residues. 8 Hemopexin repeats span residues 53-93 (GIEF…FPEL), 99-151 (LGHV…FPGI), 152-197 (PDHL…FKSM), 198-243 (PNCT…FMRC), 262-304 (RVHL…FKEL), 305-351 (HSEV…VLGI), 352-395 (EGPV…TITQ), and 396-441 (FKRI…VSQQ). A glycan (N-linked (GlcNAc...) asparagine) is linked at asparagine 87. Asparagine 168 and asparagine 199 each carry an N-linked (GlcNAc...) asparagine glycan. Residue histidine 293 participates in heme binding.

The protein belongs to the hemopexin family.

Its subcellular location is the secreted. Functionally, binds heme and transports it to the liver for breakdown and iron recovery, after which the free hemopexin returns to the circulation. The sequence is that of Hemopexin from Danio rerio (Zebrafish).